The primary structure comprises 181 residues: uncharacterized protein (181 aa).

This is an uncharacterized protein from Acidianus filamentous virus 2 (isolate Italy/Pozzuoli) (AFV-2).